A 107-amino-acid polypeptide reads, in one-letter code: Snaclec VP12 subunit A (107 aa).

2 disulfide bridges follow: cysteine 4–cysteine 15 and cysteine 32–cysteine 107. The region spanning 11 to 107 is the C-type lectin domain; the sequence is YEGNCYKAFD…ECGLAYPFIC (97 aa).

Belongs to the snaclec family. As to quaternary structure, heterodimer of subunits alpha and beta; disulfide-linked. As to expression, expressed by the venom gland.

The protein localises to the secreted. Functionally, inhibits integrin alpha-2/beta-1- (ITGA2/ITGB1) dependent melanoma metastasis. The sequence is that of Snaclec VP12 subunit A from Daboia palaestinae (Palestine viper).